A 368-amino-acid chain; its full sequence is DNA integrity scanning protein DisA (368 aa).

One can recognise a DAC domain in the interval 15 to 153 (DERLRATLAA…DGRRHVLDEP (139 aa)). Residues Gly-82, Leu-100, and 113–117 (TRHRS) each bind ATP. Residues 101–121 (QPDPSIPTNESGTRHRSAERT) are disordered. The span at 112–121 (GTRHRSAERT) shows a compositional bias: basic and acidic residues.

Belongs to the DisA family. Homooctamer. Mg(2+) is required as a cofactor.

The catalysed reaction is 2 ATP = 3',3'-c-di-AMP + 2 diphosphate. Its function is as follows. Participates in a DNA-damage check-point. DisA forms globular foci that rapidly scan along the chromosomes searching for lesions. Also has diadenylate cyclase activity, catalyzing the condensation of 2 ATP molecules into cyclic di-AMP (c-di-AMP). c-di-AMP likely acts as a signaling molecule that may couple DNA integrity with a cellular process. The sequence is that of DNA integrity scanning protein DisA from Acidothermus cellulolyticus (strain ATCC 43068 / DSM 8971 / 11B).